A 273-amino-acid polypeptide reads, in one-letter code: Large ribosomal subunit protein uL2cz/uL2cy (273 aa).

2 disordered regions span residues 1 to 20 (MAIH…AVDS) and 224 to 254 (NPVD…PALG).

Belongs to the universal ribosomal protein uL2 family. As to quaternary structure, part of the 50S ribosomal subunit.

The protein localises to the plastid. The protein resides in the chloroplast. The polypeptide is Large ribosomal subunit protein uL2cz/uL2cy (rpl2-A) (Nuphar advena (Common spatterdock)).